A 308-amino-acid chain; its full sequence is 4-hydroxyproline 2-epimerase (308 aa).

The active-site Proton acceptor is C88. Substrate contacts are provided by residues 89 to 90 (GH), H208, and D232. Catalysis depends on C236, which acts as the Proton donor. A substrate-binding site is contributed by 237–238 (GT).

This sequence belongs to the proline racemase family.

It carries out the reaction trans-4-hydroxy-L-proline = cis-4-hydroxy-D-proline. Its function is as follows. Catalyzes the epimerization of trans-4-hydroxy-L-proline (t4LHyp) to cis-4-hydroxy-D-proline (c4DHyp). Is likely involved in a degradation pathway that converts t4LHyp to alpha-ketoglutarate. Can also catalyze the epimerization of trans-3-hydroxy-L-proline (t3LHyp) to cis-3-hydroxy-D-proline (c3DHyp), albeit with 19-fold lower efficiency. Displays no proline racemase activity. The polypeptide is 4-hydroxyproline 2-epimerase (Chromobacterium violaceum (strain ATCC 12472 / DSM 30191 / JCM 1249 / CCUG 213 / NBRC 12614 / NCIMB 9131 / NCTC 9757 / MK)).